We begin with the raw amino-acid sequence, 402 residues long: Eukaryotic initiation factor 4A (402 aa).

The Q motif motif lies at 29-57 (ESFDDMELKEELLRGIYGFGFEKPSAIQK). Residues 60 to 230 (IVPCTTGKDV…NRFMRNPIRI (171 aa)) enclose the Helicase ATP-binding domain. 73–80 (AQSGTGKT) contributes to the ATP binding site. The short motif at 178–181 (DEAD) is the DEAD box element. Positions 241–402 (GIRQFYINVQ…EMPESIADLI (162 aa)) constitute a Helicase C-terminal domain.

The protein belongs to the DEAD box helicase family. eIF4A subfamily. In terms of assembly, eIF4F is a multi-subunit complex, the composition of which varies with external and internal environmental conditions. It is composed of at least EIF4A, EIF4E and EIF4G.

The enzyme catalyses ATP + H2O = ADP + phosphate + H(+). ATP-dependent RNA helicase which is a subunit of the eIF4F complex involved in cap recognition and is required for mRNA binding to ribosome. In the current model of translation initiation, eIF4A unwinds RNA secondary structures in the 5'-UTR of mRNAs which is necessary to allow efficient binding of the small ribosomal subunit, and subsequent scanning for the initiator codon. The sequence is that of Eukaryotic initiation factor 4A (inf-1) from Caenorhabditis elegans.